Consider the following 390-residue polypeptide: Bifunctional enzyme IspD/IspF (390 aa).

Residues Met-1–Ile-229 are 2-C-methyl-D-erythritol 4-phosphate cytidylyltransferase. The tract at residues Arg-230–Glu-390 is 2-C-methyl-D-erythritol 2,4-cyclodiphosphate synthase. Residues Asp-236 and His-238 each contribute to the a divalent metal cation site. Residues Asp-236–His-238 and His-262–Ser-263 contribute to the 4-CDP-2-C-methyl-D-erythritol 2-phosphate site. His-270 contacts a divalent metal cation. Residues Asp-284 to Gly-286, Thr-360 to Glu-363, Phe-367, and Arg-370 each bind 4-CDP-2-C-methyl-D-erythritol 2-phosphate.

This sequence in the N-terminal section; belongs to the IspD/TarI cytidylyltransferase family. IspD subfamily. In the C-terminal section; belongs to the IspF family. It depends on a divalent metal cation as a cofactor.

The enzyme catalyses 2-C-methyl-D-erythritol 4-phosphate + CTP + H(+) = 4-CDP-2-C-methyl-D-erythritol + diphosphate. The catalysed reaction is 4-CDP-2-C-methyl-D-erythritol 2-phosphate = 2-C-methyl-D-erythritol 2,4-cyclic diphosphate + CMP. The protein operates within isoprenoid biosynthesis; isopentenyl diphosphate biosynthesis via DXP pathway; isopentenyl diphosphate from 1-deoxy-D-xylulose 5-phosphate: step 2/6. Its pathway is isoprenoid biosynthesis; isopentenyl diphosphate biosynthesis via DXP pathway; isopentenyl diphosphate from 1-deoxy-D-xylulose 5-phosphate: step 4/6. In terms of biological role, bifunctional enzyme that catalyzes the formation of 4-diphosphocytidyl-2-C-methyl-D-erythritol from CTP and 2-C-methyl-D-erythritol 4-phosphate (MEP) (IspD), and catalyzes the conversion of 4-diphosphocytidyl-2-C-methyl-D-erythritol 2-phosphate (CDP-ME2P) to 2-C-methyl-D-erythritol 2,4-cyclodiphosphate (ME-CPP) with a corresponding release of cytidine 5-monophosphate (CMP) (IspF). This is Bifunctional enzyme IspD/IspF from Brucella abortus biovar 1 (strain 9-941).